Reading from the N-terminus, the 567-residue chain is Serine/threonine-protein kinase SSN3 (567 aa).

Residues 68 to 470 enclose the Protein kinase domain; that stretch reads YEIIGYIAAG…AINALDHSYF (403 aa). 74 to 82 lines the ATP pocket; it reads IAAGTYGKV. The disordered stretch occupies residues 88–179; sequence RQSSKSSSST…RNSENTDNRR (92 aa). Residues 90–101 show a composition bias toward low complexity; it reads SSKSSSSTGSDS. Polar residues-rich tracts occupy residues 102 to 122 and 133 to 150; these read LAQD…QNAG and PNSN…ELST. Over residues 167–179 the composition is skewed to basic and acidic residues; sequence GDKRNSENTDNRR. K190 contributes to the ATP binding site. The active-site Proton acceptor is D293. The segment covering 546–556 has biased composition (low complexity); it reads AVSGNSSSQSS. Residues 546–567 form a disordered region; sequence AVSGNSSSQSSRNMEPMKKKRK.

This sequence belongs to the protein kinase superfamily. CMGC Ser/Thr protein kinase family. CDC2/CDKX subfamily. Component of the SRB8-11 complex, a regulatory module of the Mediator complex. Requires Mg(2+) as cofactor.

It localises to the nucleus. The enzyme catalyses L-seryl-[protein] + ATP = O-phospho-L-seryl-[protein] + ADP + H(+). It catalyses the reaction L-threonyl-[protein] + ATP = O-phospho-L-threonyl-[protein] + ADP + H(+). The catalysed reaction is [DNA-directed RNA polymerase] + ATP = phospho-[DNA-directed RNA polymerase] + ADP + H(+). Functionally, component of the SRB8-11 complex. The SRB8-11 complex is a regulatory module of the Mediator complex which is itself involved in regulation of basal and activated RNA polymerase II-dependent transcription. The SRB8-11 complex may be involved in the transcriptional repression of a subset of genes regulated by Mediator. It may inhibit the association of the Mediator complex with RNA polymerase II to form the holoenzyme complex. The SRB8-11 complex phosphorylates the C-terminal domain (CTD) of the largest subunit of RNA polymerase II. The polypeptide is Serine/threonine-protein kinase SSN3 (SSN3) (Candida glabrata (strain ATCC 2001 / BCRC 20586 / JCM 3761 / NBRC 0622 / NRRL Y-65 / CBS 138) (Yeast)).